The sequence spans 406 residues: MSLSITRENFDEWMMPVYAPAPFIPVRGEGSRLWDQQGKEYIDFAGGIAVNALGHAHPALREALNEQASKFWHTGNGYTNEPVLRLAKMLIDATFAERVFFCNSGAEANEAALKLARKYAHDRFGTHKSGIVAFKNAFHGRTLFTVSAGGQPAYSQDFAPLPPDIRHAVYNDLNAASELIDDTTCAVIVEPMQGEGGVLPATKAFLQGLRELCDRHNALLIFDEVQTGVGRTGELYAYMHYGVTPDLLTTAKALGGGFPIGALLATEKCASVMTVGTHGTTYGGNPLASAVAGKLLEIVNTPEMLNGVKQRHDGFVERLNAINERFGLFSEIRGLGLLIGCVLEAEFAGKAKLISQEAAKAGVMVLIAGANVVRFAPALNVSKEEVATGLDRFALACERIKAGGSS.

Position 252 is an N6-(pyridoxal phosphate)lysine (Lys252).

The protein belongs to the class-III pyridoxal-phosphate-dependent aminotransferase family. AstC subfamily. Pyridoxal 5'-phosphate is required as a cofactor.

The catalysed reaction is N(2)-succinyl-L-ornithine + 2-oxoglutarate = N-succinyl-L-glutamate 5-semialdehyde + L-glutamate. Its pathway is amino-acid degradation; L-arginine degradation via AST pathway; L-glutamate and succinate from L-arginine: step 3/5. In terms of biological role, catalyzes the transamination of N(2)-succinylornithine and alpha-ketoglutarate into N(2)-succinylglutamate semialdehyde and glutamate. Can also act as an acetylornithine aminotransferase. This chain is Succinylornithine transaminase, found in Citrobacter koseri (strain ATCC BAA-895 / CDC 4225-83 / SGSC4696).